Consider the following 245-residue polypeptide: 5-oxoprolinase subunit A (245 aa).

Belongs to the LamB/PxpA family. As to quaternary structure, forms a complex composed of PxpA, PxpB and PxpC.

The enzyme catalyses 5-oxo-L-proline + ATP + 2 H2O = L-glutamate + ADP + phosphate + H(+). Catalyzes the cleavage of 5-oxoproline to form L-glutamate coupled to the hydrolysis of ATP to ADP and inorganic phosphate. The protein is 5-oxoprolinase subunit A of Cronobacter sakazakii (strain ATCC BAA-894) (Enterobacter sakazakii).